A 362-amino-acid chain; its full sequence is Type-2 angiotensin II receptor (362 aa).

Topologically, residues 1-44 (MKANFSLATISKNITSSLHVGFVNISSNESTFNCSHKPSDKHLD) are extracellular. 5 N-linked (GlcNAc...) asparagine glycosylation sites follow: Asn4, Asn13, Asn24, Asn28, and Asn33. 2 cysteine pairs are disulfide-bonded: Cys34–Cys289 and Cys116–Cys194. The helical transmembrane segment at 45–69 (AIPVLYYIIFGVGFLVNTIVVTLFC) threads the bilayer. The Cytoplasmic segment spans residues 70–79 (CQKGPKKVSS). The chain crosses the membrane as a helical span at residues 80 to 103 (IYIFNLAVADLLLLATLPLWATYY). Residues Tyr102 and Tyr103 each coordinate angiotensin II. Topologically, residues 104–113 (SHRYDWIFGP) are extracellular. A helical membrane pass occupies residues 114 to 139 (VMCKVFGSFLTLNMFASIFFITCMSV). Topologically, residues 140–158 (DRYQSVIYPFLSQRRNPWQ) are cytoplasmic. A helical membrane pass occupies residues 159 to 180 (ASYIVPLVWCMACLSSLPTFYF). 3 residues coordinate angiotensin II: Arg181, Tyr203, and Lys214. Topologically, residues 181–205 (RDVRTIEYLGVNACIMAFPPEKYAQ) are extracellular. Residues 206-231 (WSAGIALMKNILGFIIPLIFIATCYF) form a helical membrane-spanning segment. Residues 232-256 (GIRKHLLKTNSYGKNRITRDQVLKM) are Cytoplasmic-facing. A helical transmembrane segment spans residues 257–280 (AAAVVLAFIICWLPFHVLTFLDAL). Asp278 is an angiotensin II binding site. Over 281–293 (AWMGVINSCEVIA) the chain is Extracellular. The chain crosses the membrane as a helical span at residues 294 to 319 (VIDLALPFAILLGFTNSCINPFLYCF). An angiotensin II-binding site is contributed by Asp296. Topologically, residues 320–362 (VGNRFQQKLRRVFRVPITWLQGKRENGSCGKSSSFREMETFVS) are cytoplasmic. Residues 323 to 332 (RFQQKLRRVF) form a helix VIII region.

Belongs to the G-protein coupled receptor 1 family. In terms of assembly, interacts with MTUS1.

It is found in the cell membrane. Functionally, receptor for angiotensin II, a vasoconstricting peptide. Signals primarily via a non-canonical G-protein- and beta-arrestin independent pathways. Cooperates with MTUS1 to inhibit ERK2 activation and cell proliferation. The chain is Type-2 angiotensin II receptor (AGTR2) from Ovis aries (Sheep).